Here is a 215-residue protein sequence, read N- to C-terminus: Orotate phosphoribosyltransferase (215 aa).

Lysine 26 is a binding site for 5-phospho-alpha-D-ribose 1-diphosphate. Residue 34 to 35 (FF) participates in orotate binding. Residues 72–73 (YK), arginine 99, lysine 100, lysine 103, histidine 105, and 124–132 (DDVITAGTA) each bind 5-phospho-alpha-D-ribose 1-diphosphate. The orotate site is built by threonine 128 and arginine 156.

The protein belongs to the purine/pyrimidine phosphoribosyltransferase family. PyrE subfamily. As to quaternary structure, homodimer. Mg(2+) is required as a cofactor.

The enzyme catalyses orotidine 5'-phosphate + diphosphate = orotate + 5-phospho-alpha-D-ribose 1-diphosphate. Its pathway is pyrimidine metabolism; UMP biosynthesis via de novo pathway; UMP from orotate: step 1/2. Functionally, catalyzes the transfer of a ribosyl phosphate group from 5-phosphoribose 1-diphosphate to orotate, leading to the formation of orotidine monophosphate (OMP). The chain is Orotate phosphoribosyltransferase from Yersinia pseudotuberculosis serotype O:1b (strain IP 31758).